We begin with the raw amino-acid sequence, 335 residues long: Tetraacyldisaccharide 4'-kinase (335 aa).

ATP is bound at residue 58–65 (TVGGSGKT).

The protein belongs to the LpxK family.

The enzyme catalyses a lipid A disaccharide + ATP = a lipid IVA + ADP + H(+). It participates in glycolipid biosynthesis; lipid IV(A) biosynthesis; lipid IV(A) from (3R)-3-hydroxytetradecanoyl-[acyl-carrier-protein] and UDP-N-acetyl-alpha-D-glucosamine: step 6/6. Its function is as follows. Transfers the gamma-phosphate of ATP to the 4'-position of a tetraacyldisaccharide 1-phosphate intermediate (termed DS-1-P) to form tetraacyldisaccharide 1,4'-bis-phosphate (lipid IVA). The sequence is that of Tetraacyldisaccharide 4'-kinase from Shewanella sp. (strain MR-7).